Here is a 492-residue protein sequence, read N- to C-terminus: KAT8 regulatory NSL complex subunit 2 (492 aa).

Lysine 78 participates in a covalent cross-link: Glycyl lysine isopeptide (Lys-Gly) (interchain with G-Cter in SUMO2). The segment at 126–182 is disordered; the sequence is ELGSQTPESSRSEASRILDEDSWSDGEQEPITVDQTWRGDPDSEADSIDSDQEDPLK. At threonine 131 the chain carries Phosphothreonine. A compositionally biased stretch (basic and acidic residues) spans 135-144; sequence SRSEASRILD. 5 positions are modified to phosphoserine: serine 147, serine 149, serine 168, serine 172, and serine 175. Positions 167-178 are enriched in acidic residues; the sequence is DSEADSIDSDQE. The tract at residues 308 to 364 is required for interaction with other NSL complex members; the sequence is DVRCSNQSLPMTRHCLTHICQDTNQVLFKCCQGSEEVPCNKPVPVSLSEDPCCPLHF. A disordered region spans residues 455–492; that stretch reads AGDGCRSQGSRNSEKASAPLSQSGLATANGKPEPTSIS.

As to quaternary structure, component of the NSL complex at least composed of KAT8/MOF, KANSL1, KANSL2, KANSL3, MCRS1, PHF20, OGT1/OGT, WDR5 and HCFC1.

Its subcellular location is the nucleus. The protein resides in the mitochondrion. Its function is as follows. Non-catalytic component of the NSL histone acetyltransferase complex, a multiprotein complex that mediates histone H4 acetylation at 'Lys-5'- and 'Lys-8' (H4K5ac and H4K8ac) at transcription start sites and promotes transcription initiation. Required for NSL complex stability and for transcription of intraciliary transport genes in both ciliated and non-ciliated cells by regulating histone H4 acetylation at 'Lys-5'- and 'Lys-12' (H4K5ac and H4K12ac). This is necessary for cilium assembly in ciliated cells and for organization of the microtubule cytoskeleton in non-ciliated cells. Required within the NSL complex to maintain nuclear architecture stability by promoting KAT8-mediated acetylation of lamin LMNA. The sequence is that of KAT8 regulatory NSL complex subunit 2 (KANSL2) from Homo sapiens (Human).